Consider the following 84-residue polypeptide: Putative pelota-like protein YCL001W-B (84 aa).

Belongs to the eukaryotic release factor 1 family. Pelota subfamily. Highly divergent.

The protein is Putative pelota-like protein YCL001W-B of Saccharomyces cerevisiae (strain ATCC 204508 / S288c) (Baker's yeast).